Consider the following 202-residue polypeptide: Large ribosomal subunit protein uL4 (202 aa).

Positions 42–52 (GTKAQKSRSQV) are enriched in polar residues. The interval 42–70 (GTKAQKSRSQVSGTTKKSKKQKGGGARHG) is disordered.

This sequence belongs to the universal ribosomal protein uL4 family. Part of the 50S ribosomal subunit.

One of the primary rRNA binding proteins, this protein initially binds near the 5'-end of the 23S rRNA. It is important during the early stages of 50S assembly. It makes multiple contacts with different domains of the 23S rRNA in the assembled 50S subunit and ribosome. Its function is as follows. Forms part of the polypeptide exit tunnel. This Xylella fastidiosa (strain 9a5c) protein is Large ribosomal subunit protein uL4.